Reading from the N-terminus, the 20-residue chain is Maximin-Ht (20 aa).

Belongs to the bombinin family. As to expression, expressed by the skin glands.

It is found in the secreted. Functionally, has antimicrobial activity. In Bombina maxima (Giant fire-bellied toad), this protein is Maximin-Ht.